Reading from the N-terminus, the 54-residue chain is MAATDVRPKITMACQVCKHRNYITRKNRRNDPDRLELRKFCPNCRTHTEHRETR.

The protein belongs to the bacterial ribosomal protein bL33 family.

This is Large ribosomal subunit protein bL33 from Parafrankia sp. (strain EAN1pec).